The following is a 396-amino-acid chain: Tryptophan synthase beta chain (396 aa).

Position 88 is an N6-(pyridoxal phosphate)lysine (lysine 88).

It belongs to the TrpB family. Tetramer of two alpha and two beta chains. Pyridoxal 5'-phosphate is required as a cofactor.

The catalysed reaction is (1S,2R)-1-C-(indol-3-yl)glycerol 3-phosphate + L-serine = D-glyceraldehyde 3-phosphate + L-tryptophan + H2O. The protein operates within amino-acid biosynthesis; L-tryptophan biosynthesis; L-tryptophan from chorismate: step 5/5. Functionally, the beta subunit is responsible for the synthesis of L-tryptophan from indole and L-serine. In Shewanella baltica (strain OS185), this protein is Tryptophan synthase beta chain.